Here is a 220-residue protein sequence, read N- to C-terminus: MEEEIILLDYWASMYGMRTRIALEEKKVKYEYREEDLSNKSPLLLQMNPIHKKIPVLIHEGKPICESIIQVQYIDELWPDTNPILPSDPYQRAQARFWADYIDKKTYVPCKALWSESGEKQEAAKIEFIEVLKTLDSELGDKYYFGGNEFGLVDIAFIGFYSWFRTYEEVANLSIVLEFPKLMAWAQRCLKRESVAKALPDSDKVLKSVSDHRKIILGID.

Residues Glu-3–Asn-82 form the GST N-terminal domain. Glutathione is bound by residues Ser-13–Met-14, Asn-39–Lys-40, Lys-53–Ile-54, and Glu-66–Ser-67. Positions Asp-88–Ser-208 constitute a GST C-terminal domain.

The protein belongs to the GST superfamily. Tau family.

It localises to the cytoplasm. The protein resides in the cytosol. It carries out the reaction RX + glutathione = an S-substituted glutathione + a halide anion + H(+). In terms of biological role, may be involved in the conjugation of reduced glutathione to a wide number of exogenous and endogenous hydrophobic electrophiles and have a detoxification role against certain herbicides. The chain is Glutathione S-transferase U23 (GSTU23) from Arabidopsis thaliana (Mouse-ear cress).